The sequence spans 443 residues: Endoplasmic reticulum protein SC65 (443 aa).

The signal sequence occupies residues 1-18 (MARAAWGLLWLLLGSAGA). The segment at 81–102 (SGPATSQPRPAPGPDGDNEGDG) is disordered. The N-linked (GlcNAc...) asparagine glycan is linked to Asn367. Acidic residues-rich tracts occupy residues 387–398 (DEMELEETESLP), 407–419 (AEFE…EEGL), and 431–443 (GDED…PELA). The disordered stretch occupies residues 387–443 (DEMELEETESLPEPEKPLSDAEFEGEGDYEEGLYADWWQEPDAKGDEDEAEPEPELA).

It belongs to the leprecan family. In terms of assembly, interacts with PLOD1, P3H3 and PPIB. Identified in a complex with PLOD1 and P3H3. Found in testis, brain, heart and at a much lower level in liver.

It localises to the endoplasmic reticulum. Part of a complex composed of PLOD1, P3H3 and P3H4 that catalyzes hydroxylation of lysine residues in collagen alpha chains and is required for normal assembly and cross-linking of collagen fibrils. Required for normal bone density and normal skin stability via its role in hydroxylation of lysine residues in collagen alpha chains and in collagen fibril assembly. The chain is Endoplasmic reticulum protein SC65 from Rattus norvegicus (Rat).